We begin with the raw amino-acid sequence, 404 residues long: Phosphopentomutase (404 aa).

Residues Asp-10, Asp-303, His-308, Asp-344, His-345, and His-356 each coordinate Mn(2+).

The protein belongs to the phosphopentomutase family. It depends on Mn(2+) as a cofactor.

It localises to the cytoplasm. It carries out the reaction 2-deoxy-alpha-D-ribose 1-phosphate = 2-deoxy-D-ribose 5-phosphate. The catalysed reaction is alpha-D-ribose 1-phosphate = D-ribose 5-phosphate. The protein operates within carbohydrate degradation; 2-deoxy-D-ribose 1-phosphate degradation; D-glyceraldehyde 3-phosphate and acetaldehyde from 2-deoxy-alpha-D-ribose 1-phosphate: step 1/2. Its function is as follows. Isomerase that catalyzes the conversion of deoxy-ribose 1-phosphate (dRib-1-P) and ribose 1-phosphate (Rib-1-P) to deoxy-ribose 5-phosphate (dRib-5-P) and ribose 5-phosphate (Rib-5-P), respectively. This is Phosphopentomutase from Shewanella sp. (strain W3-18-1).